Here is a 115-residue protein sequence, read N- to C-terminus: U3-lycotoxin-Ls1q (115 aa).

Residues 1-20 (MKFVLLFGVLLVTLFSYSSA) form the signal peptide. A propeptide spanning residues 21-44 (EMFDDFDQADEDELLSLIEKEEAR) is cleaved from the precursor. Disulfide bonds link Cys-48/Cys-63, Cys-55/Cys-72, Cys-62/Cys-87, and Cys-74/Cys-85.

This sequence belongs to the neurotoxin 19 (CSTX) family. 01 subfamily. In terms of tissue distribution, expressed by the venom gland.

It is found in the secreted. This chain is U3-lycotoxin-Ls1q, found in Lycosa singoriensis (Wolf spider).